Reading from the N-terminus, the 424-residue chain is Histidine--tRNA ligase (424 aa).

This sequence belongs to the class-II aminoacyl-tRNA synthetase family. In terms of assembly, homodimer.

It is found in the cytoplasm. It carries out the reaction tRNA(His) + L-histidine + ATP = L-histidyl-tRNA(His) + AMP + diphosphate + H(+). The protein is Histidine--tRNA ligase of Salmonella agona (strain SL483).